A 98-amino-acid chain; its full sequence is Small ribosomal subunit protein eS24 (98 aa).

Residues 76–98 (GRQRTERSYLLNRGEPKKEEEEA) form a disordered region. The segment covering 89-98 (GEPKKEEEEA) has biased composition (basic and acidic residues).

The protein belongs to the eukaryotic ribosomal protein eS24 family.

This is Small ribosomal subunit protein eS24 from Methanosphaerula palustris (strain ATCC BAA-1556 / DSM 19958 / E1-9c).